Reading from the N-terminus, the 196-residue chain is Crossover junction endodeoxyribonuclease RuvC (196 aa).

Residues Asp-23, Glu-83, and His-156 contribute to the active site. Residues Asp-23, Glu-83, and His-156 each coordinate Mg(2+).

It belongs to the RuvC family. Homodimer which binds Holliday junction (HJ) DNA. The HJ becomes 2-fold symmetrical on binding to RuvC with unstacked arms; it has a different conformation from HJ DNA in complex with RuvA. In the full resolvosome a probable DNA-RuvA(4)-RuvB(12)-RuvC(2) complex forms which resolves the HJ. Mg(2+) serves as cofactor.

It is found in the cytoplasm. The catalysed reaction is Endonucleolytic cleavage at a junction such as a reciprocal single-stranded crossover between two homologous DNA duplexes (Holliday junction).. Its function is as follows. The RuvA-RuvB-RuvC complex processes Holliday junction (HJ) DNA during genetic recombination and DNA repair. Endonuclease that resolves HJ intermediates. Cleaves cruciform DNA by making single-stranded nicks across the HJ at symmetrical positions within the homologous arms, yielding a 5'-phosphate and a 3'-hydroxyl group; requires a central core of homology in the junction. The consensus cleavage sequence is 5'-(A/T)TT(C/G)-3'. Cleavage occurs on the 3'-side of the TT dinucleotide at the point of strand exchange. HJ branch migration catalyzed by RuvA-RuvB allows RuvC to scan DNA until it finds its consensus sequence, where it cleaves and resolves the cruciform DNA. In Treponema pallidum (strain Nichols), this protein is Crossover junction endodeoxyribonuclease RuvC.